The following is an 81-amino-acid chain: Putative phytosulfokines 6 (81 aa).

The signal sequence occupies residues 1–20 (MKQSLCLAVLFLILSTSSSA). A propeptide spanning residues 21-72 (IRRGKEDQEINPLVSATSVEEDSVNKLMGMEYCGEGDEECLRRRMMTESHLD) is cleaved from the precursor. Sulfotyrosine occurs at positions 73 and 75. A propeptide spanning residues 78 to 81 (HHKH) is cleaved from the precursor.

It belongs to the phytosulfokine family. In terms of processing, sulfation is important for activity and for the binding to a putative membrane receptor. Post-translationally, PSK-beta is an enzymatic derivative of PSK-alpha. Expressed in roots, leaves, stems, flowers and siliques. Most abundant in vascular bundles and in root tips.

Its subcellular location is the secreted. In terms of biological role, promotes plant cell differentiation, organogenesis and somatic embryogenesis as well as cell proliferation. The sequence is that of Putative phytosulfokines 6 (PSK6) from Arabidopsis thaliana (Mouse-ear cress).